The chain runs to 324 residues: MKLQQLRYIVEVVNHNLNVSSTAEGLYTSQPGISKQVRMLEDELGIQIFSRSGKHLTQVTPAGQEIIRIAREVLSKVDAIKSVAGEHTWPDKGSLYIATTHTQARYALPNVIKGFIERYPRVSLHMHQGSPTQIADAVSKGNADFAIATEALHLYEDLVMLPCYHWNRAIVVTPDHPLAGKKAITIEELAQYPLVTYTFGFTGRSELDTAFNRAGLTPRIVFTATDADVIKTYVRLGLGVGVIASMAVDPVADPDLVRVDAHDIFSHSTTKIGFRRSTFLRSYMYDFIQRFAPHLTRDVVDAAVALRSNEEIEVMFKDIKLPEK.

Residues 1 to 59 form the HTH lysR-type domain; that stretch reads MKLQQLRYIVEVVNHNLNVSSTAEGLYTSQPGISKQVRMLEDELGIQIFSRSGKHLTQV. The segment at residues 19-38 is a DNA-binding region (H-T-H motif); the sequence is VSSTAEGLYTSQPGISKQVR.

This sequence belongs to the LysR transcriptional regulatory family. As to quaternary structure, homotetramer.

Its subcellular location is the cytoplasm. Its function is as follows. This protein is a positive regulator of gene expression for the cysteine regulon. The inducer for CysB is N-acetylserine. This Escherichia coli O157:H7 protein is HTH-type transcriptional regulator CysB (cysB).